The primary structure comprises 1040 residues: Multidrug resistance protein MdtB (1040 aa).

A run of 12 helical transmembrane segments spans residues Leu-25 to Ala-45, Leu-347 to Ala-367, Ile-369 to Leu-389, Leu-396 to Ile-416, Ile-440 to Phe-460, Phe-472 to Pro-492, Trp-537 to Ile-557, Leu-863 to Ile-883, Phe-888 to Ala-908, Ile-911 to Val-931, Ile-968 to Val-988, and Ile-998 to Ile-1018.

This sequence belongs to the resistance-nodulation-cell division (RND) (TC 2.A.6) family. MdtB subfamily. Part of a tripartite efflux system composed of MdtA, MdtB and MdtC. MdtB forms a heteromultimer with MdtC.

It is found in the cell inner membrane. Functionally, the MdtABC tripartite complex confers resistance against novobiocin and deoxycholate. The polypeptide is Multidrug resistance protein MdtB (Escherichia coli O127:H6 (strain E2348/69 / EPEC)).